Reading from the N-terminus, the 640-residue chain is Autophagy-related protein 20 (640 aa).

2 stretches are compositionally biased toward polar residues: residues 1–18 (MSDL…SETR) and 126–153 (AETC…PSVS). Disordered stretches follow at residues 1-63 (MSDL…NNKV) and 126-156 (AETC…SNRK). An N-acetylserine modification is found at S2. The PX domain maps to 140 to 301 (MNGETSASEE…DFLDPNNHNW (162 aa)). A 1,2-diacyl-sn-glycero-3-phospho-(1D-myo-inositol-3-phosphate) contacts are provided by R192, S194, K218, and R267. Phosphoserine is present on residues S361 and S363. Coiled coils occupy residues 475–512 (LQNE…DNEM) and 562–593 (TASI…KVIK).

It belongs to the sorting nexin family. In terms of assembly, forms a complex with SNX4 and ATG17.

The protein localises to the endosome membrane. The protein resides in the preautophagosomal structure membrane. Functionally, required for cytoplasm to vacuole transport (Cvt), pexophagy and mitophagy. Also involved in endoplasmic reticulum-specific autophagic process and is essential for the survival of cells subjected to severe ER stress. Functions in protein retrieval from the endocytic pathway. Required for proper sorting of the v-SNARE protein SNC1. This chain is Autophagy-related protein 20 (ATG20), found in Saccharomyces cerevisiae (strain ATCC 204508 / S288c) (Baker's yeast).